We begin with the raw amino-acid sequence, 528 residues long: Probable protein phosphatase 2C 51 (528 aa).

A helical membrane pass occupies residues 8 to 28 (SLLNLGLLIIFFVFFFLVINC). The 375-residue stretch at 71–445 (RCHTAAIQGR…DNMAAVVVPL (375 aa)) folds into the PPM-type phosphatase domain. Positions 117, 118, 385, and 436 each coordinate Mn(2+).

It belongs to the PP2C family. The cofactor is Mg(2+). Requires Mn(2+) as cofactor.

Its subcellular location is the membrane. It carries out the reaction O-phospho-L-seryl-[protein] + H2O = L-seryl-[protein] + phosphate. The enzyme catalyses O-phospho-L-threonyl-[protein] + H2O = L-threonyl-[protein] + phosphate. In Arabidopsis thaliana (Mouse-ear cress), this protein is Probable protein phosphatase 2C 51.